Reading from the N-terminus, the 389-residue chain is Tubulin-like protein CetZ3 (389 aa).

GTP is bound by residues 10-14 (QAGGK), 110-112 (GTG), glutamate 142, asparagine 169, and asparagine 187.

Belongs to the CetZ family.

It localises to the cytoplasm. Involved in cell shape control. The sequence is that of Tubulin-like protein CetZ3 from Haloferax volcanii (strain ATCC 29605 / DSM 3757 / JCM 8879 / NBRC 14742 / NCIMB 2012 / VKM B-1768 / DS2) (Halobacterium volcanii).